A 531-amino-acid chain; its full sequence is 2-isopropylmalate synthase (531 aa).

Residues 8–284 enclose the Pyruvate carboxyltransferase domain; that stretch reads IIIFDTTLRD…LTNIDTKQIY (277 aa). Mn(2+)-binding residues include Asp-17, His-208, His-210, and Asn-244. Residues 408–531 are regulatory domain; sequence RVELVQVSCG…TQDKQTEVTA (124 aa).

The protein belongs to the alpha-IPM synthase/homocitrate synthase family. LeuA type 1 subfamily. Homodimer. The cofactor is Mn(2+).

It localises to the cytoplasm. It catalyses the reaction 3-methyl-2-oxobutanoate + acetyl-CoA + H2O = (2S)-2-isopropylmalate + CoA + H(+). The protein operates within amino-acid biosynthesis; L-leucine biosynthesis; L-leucine from 3-methyl-2-oxobutanoate: step 1/4. Catalyzes the condensation of the acetyl group of acetyl-CoA with 3-methyl-2-oxobutanoate (2-ketoisovalerate) to form 3-carboxy-3-hydroxy-4-methylpentanoate (2-isopropylmalate). In Nostoc sp. (strain PCC 7120 / SAG 25.82 / UTEX 2576), this protein is 2-isopropylmalate synthase.